The sequence spans 293 residues: MLIEFTKMHGLGNDFMVIDLVTQRLELTPELITLLADRNLGIGFDQLLVVEPPMRPDVDFRYRIFNSDGSEVEQCGNGARCFARFVQARKLSFKQRIRVETKSGILTLSTDNYGWVEVDMGKPRFEPAEIPFTPKAITKIQNAYHLDVEGTPVQLYVANMGNPHAVIKVDDILTADVEKLGKAIESHPAFPERVNVGFMQVMNQRHIRLRVYERGVGETQACGTGACAAVATGIREGWLDEGEEIRAQLYGGSLLIRWSPGYSVMMTGPTAFVYEGVFSPDGIMAQAGLKPLS.

Residues N13, Q46, and N66 each coordinate substrate. Catalysis depends on C75, which acts as the Proton donor. Residues 76 to 77, N162, N195, and 213 to 214 each bind substrate; these read GN and ER. C222 functions as the Proton acceptor in the catalytic mechanism. 223 to 224 is a binding site for substrate; it reads GT.

This sequence belongs to the diaminopimelate epimerase family. Homodimer.

The protein resides in the cytoplasm. It carries out the reaction (2S,6S)-2,6-diaminopimelate = meso-2,6-diaminopimelate. It functions in the pathway amino-acid biosynthesis; L-lysine biosynthesis via DAP pathway; DL-2,6-diaminopimelate from LL-2,6-diaminopimelate: step 1/1. In terms of biological role, catalyzes the stereoinversion of LL-2,6-diaminopimelate (L,L-DAP) to meso-diaminopimelate (meso-DAP), a precursor of L-lysine and an essential component of the bacterial peptidoglycan. The chain is Diaminopimelate epimerase from Psychrobacter sp. (strain PRwf-1).